A 723-amino-acid polypeptide reads, in one-letter code: Catalase-peroxidase (723 aa).

A signal peptide spans 1–29 (MDGNDLVENKCPVMHGGITVAGHSNTAWW). A cross-link (tryptophyl-tyrosyl-methioninium (Trp-Tyr) (with M-251)) is located at residues 97-225 (WHSAGSYRLA…LAAVQMGLIY (129 aa)). The active-site Proton acceptor is histidine 98. A cross-link (tryptophyl-tyrosyl-methioninium (Tyr-Met) (with W-97)) is located at residues 225–251 (YVNPEGVNGKSDPLKSAAQVRETFARM). A heme b-binding site is contributed by histidine 266.

This sequence belongs to the peroxidase family. Peroxidase/catalase subfamily. In terms of assembly, homodimer or homotetramer. It depends on heme b as a cofactor. Post-translationally, formation of the three residue Trp-Tyr-Met cross-link is important for the catalase, but not the peroxidase activity of the enzyme.

The catalysed reaction is H2O2 + AH2 = A + 2 H2O. It carries out the reaction 2 H2O2 = O2 + 2 H2O. Bifunctional enzyme with both catalase and broad-spectrum peroxidase activity. The polypeptide is Catalase-peroxidase (Hyphomonas neptunium (strain ATCC 15444)).